The primary structure comprises 151 residues: Cysteine protease inhibitor 5 (151 aa).

2 disulfide bridges follow: Cys-13/Cys-65 and Cys-114/Cys-120.

Belongs to the protease inhibitor I3 (leguminous Kunitz-type inhibitor) family.

The protein localises to the vacuole. Inhibitor of cysteine proteases. May protect the plant by inhibiting proteases of invading organisms. The polypeptide is Cysteine protease inhibitor 5 (Solanum tuberosum (Potato)).